The primary structure comprises 284 residues: Tropomyosin isoforms a/b/d/f (284 aa).

Residues M1–Y284 adopt a coiled-coil conformation. The tract at residues E40 to V78 is disordered.

The protein belongs to the tropomyosin family. Isoform a and isoform d are expressed in body wall muscles, vulva, anus muscles and male tail muscles. Located to the myofibrils of thin actin filaments.

Its subcellular location is the cytoplasm. It is found in the myofibril. It localises to the sarcomere. The protein localises to the i band. Tropomyosin, in association with the troponin complex, plays a central role in the calcium dependent regulation of muscle contraction. Involved in muscle actin filament organization and muscle arm extension and morphology. Protects actin filaments from depolymerization by unc-60 in vitro. Also has a role in male mating behavior by regulating the copulatory spicules. Binds to F-actin. The protein is Tropomyosin isoforms a/b/d/f (lev-11) of Caenorhabditis elegans.